The chain runs to 287 residues: (S)-phenoxypropionate/alpha-ketoglutarate-dioxygenase (287 aa).

The Fe cation site is built by H102 and D104. 2 residues coordinate 2-oxoglutarate: T129 and W242. H257 provides a ligand contact to Fe cation. Residue R268 participates in 2-oxoglutarate binding.

Belongs to the TfdA dioxygenase family. In terms of assembly, monomer. Fe cation is required as a cofactor. It depends on L-ascorbate as a cofactor.

The catalysed reaction is (S)-2-(4-chloro-2-methylphenoxy)propanoate + 2-oxoglutarate + O2 = 2-methyl-4-chlorophenol + pyruvate + succinate + CO2. It carries out the reaction (S)-(2,4-dichlorophenoxy)propanoate + 2-oxoglutarate + O2 = 2,4-dichlorophenol + pyruvate + succinate + CO2. It functions in the pathway xenobiotic degradation; 2-(2,4-dichlorophenoxy)propanoate degradation. Involved in the degradation of the phenoxypropionate herbicides. Catalyzes the enantiospecific cleavage of the ether bond in the herbicid S-dichlorprop ((S)-2-(2,4-dichlorophenoxy)propionate)(S-2,4-DP) and S-mecoprop ((S)-2-(4-chloro-2-methylphenoxy)propionate)(S-2,4-MCPP). It can also accept (RS)-2-(4-chloro-2-methylphenoxy)propionate ((RS)-2,4-MCPP) and phenoxyacetate derivatives such as 2,4-dichlorophenoxyacetate (2,4-D), however it can only accept 2-oxoglutarate as oxygen acceptor. This is (S)-phenoxypropionate/alpha-ketoglutarate-dioxygenase from Sphingobium herbicidovorans (strain ATCC 700291 / DSM 11019 / CCUG 56400 / KCTC 2939 / LMG 18315 / NBRC 16415 / MH) (Sphingomonas herbicidovorans).